The sequence spans 77 residues: Large ribosomal subunit protein uL24 (77 aa).

It belongs to the universal ribosomal protein uL24 family. As to quaternary structure, part of the 50S ribosomal subunit.

Functionally, one of two assembly initiator proteins, it binds directly to the 5'-end of the 23S rRNA, where it nucleates assembly of the 50S subunit. One of the proteins that surrounds the polypeptide exit tunnel on the outside of the subunit. The chain is Large ribosomal subunit protein uL24 from Campylobacter jejuni subsp. doylei (strain ATCC BAA-1458 / RM4099 / 269.97).